Here is a 576-residue protein sequence, read N- to C-terminus: Sulfite reductase [NADPH] hemoprotein beta-component (576 aa).

[4Fe-4S] cluster-binding residues include C439, C445, C485, and C489. Residue C489 coordinates siroheme.

Belongs to the nitrite and sulfite reductase 4Fe-4S domain family. As to quaternary structure, alpha(8)-beta(8). The alpha component is a flavoprotein, the beta component is a hemoprotein. The cofactor is siroheme. [4Fe-4S] cluster is required as a cofactor.

It catalyses the reaction hydrogen sulfide + 3 NADP(+) + 3 H2O = sulfite + 3 NADPH + 4 H(+). It participates in sulfur metabolism; hydrogen sulfide biosynthesis; hydrogen sulfide from sulfite (NADPH route): step 1/1. Its function is as follows. Component of the sulfite reductase complex that catalyzes the 6-electron reduction of sulfite to sulfide. This is one of several activities required for the biosynthesis of L-cysteine from sulfate. The protein is Sulfite reductase [NADPH] hemoprotein beta-component of Aliivibrio fischeri (strain ATCC 700601 / ES114) (Vibrio fischeri).